We begin with the raw amino-acid sequence, 462 residues long: A-type ATP synthase subunit B (462 aa).

It belongs to the ATPase alpha/beta chains family. As to quaternary structure, has multiple subunits with at least A(3), B(3), C, D, E, F, H, I and proteolipid K(x).

Its subcellular location is the cell membrane. In terms of biological role, component of the A-type ATP synthase that produces ATP from ADP in the presence of a proton gradient across the membrane. The B chain is a regulatory subunit. This is A-type ATP synthase subunit B from Methanococcus vannielii (strain ATCC 35089 / DSM 1224 / JCM 13029 / OCM 148 / SB).